Here is a 418-residue protein sequence, read N- to C-terminus: Probable serine hydroxymethyltransferase (418 aa).

(6S)-5,6,7,8-tetrahydrofolate is bound by residues Leu118 and 122 to 124 (GHL). Position 226 is an N6-(pyridoxal phosphate)lysine (Lys226). 351-353 (SPF) serves as a coordination point for (6S)-5,6,7,8-tetrahydrofolate.

This sequence belongs to the SHMT family. In terms of assembly, homodimer. Requires pyridoxal 5'-phosphate as cofactor.

Its subcellular location is the cytoplasm. It carries out the reaction (6R)-5,10-methylene-5,6,7,8-tetrahydrofolate + glycine + H2O = (6S)-5,6,7,8-tetrahydrofolate + L-serine. Its pathway is one-carbon metabolism; tetrahydrofolate interconversion. Catalyzes the reversible interconversion of serine and glycine with tetrahydrofolate (THF) serving as the one-carbon carrier. This reaction serves as the major source of one-carbon groups required for the biosynthesis of purines, thymidylate, methionine, and other important biomolecules. The protein is Probable serine hydroxymethyltransferase of Mesomycoplasma hyopneumoniae (strain J / ATCC 25934 / NCTC 10110) (Mycoplasma hyopneumoniae).